The primary structure comprises 516 residues: Probable cyclic di-GMP phosphodiesterase PdeB (516 aa).

2 helical membrane passes run 6 to 26 and 242 to 262; these read LVGL…GLSI and QVFI…MFVL. Residues 268–516 enclose the EAL domain; the sequence is IQSPHHRLQD…DFLRWAEQHL (249 aa).

The protein resides in the cell inner membrane. The enzyme catalyses 3',3'-c-di-GMP + H2O = 5'-phosphoguanylyl(3'-&gt;5')guanosine + H(+). Phosphodiesterase (PDE) that catalyzes the hydrolysis of cyclic-di-GMP (c-di-GMP) to 5'-pGpG. The chain is Probable cyclic di-GMP phosphodiesterase PdeB from Escherichia coli (strain K12).